Consider the following 308-residue polypeptide: tRNA dimethylallyltransferase (308 aa).

11 to 18 (GPTGIGKT) is an ATP binding site. 13-18 (TGIGKT) serves as a coordination point for substrate. The tract at residues 36–39 (DSMQ) is interaction with substrate tRNA.

This sequence belongs to the IPP transferase family. Monomer. Mg(2+) serves as cofactor.

The enzyme catalyses adenosine(37) in tRNA + dimethylallyl diphosphate = N(6)-dimethylallyladenosine(37) in tRNA + diphosphate. Catalyzes the transfer of a dimethylallyl group onto the adenine at position 37 in tRNAs that read codons beginning with uridine, leading to the formation of N6-(dimethylallyl)adenosine (i(6)A). The chain is tRNA dimethylallyltransferase from Lactobacillus gasseri (strain ATCC 33323 / DSM 20243 / BCRC 14619 / CIP 102991 / JCM 1131 / KCTC 3163 / NCIMB 11718 / NCTC 13722 / AM63).